The primary structure comprises 448 residues: Argininosuccinate synthase (448 aa).

ATP-binding positions include 17–25 (AFSGGLDTS) and A43. Residue Y99 participates in L-citrulline binding. Residues G129 and T131 each coordinate ATP. L-aspartate is bound by residues T131, N135, and D136. N135 lines the L-citrulline pocket. D136 lines the ATP pocket. The L-citrulline site is built by R139 and S192. D194 is a binding site for ATP. 3 residues coordinate L-citrulline: T201, E203, and E280.

This sequence belongs to the argininosuccinate synthase family. Type 2 subfamily. As to quaternary structure, homotetramer.

The protein resides in the cytoplasm. The enzyme catalyses L-citrulline + L-aspartate + ATP = 2-(N(omega)-L-arginino)succinate + AMP + diphosphate + H(+). The protein operates within amino-acid biosynthesis; L-arginine biosynthesis; L-arginine from L-ornithine and carbamoyl phosphate: step 2/3. In Bradyrhizobium sp. (strain ORS 278), this protein is Argininosuccinate synthase.